Here is a 280-residue protein sequence, read N- to C-terminus: uncharacterized protein (280 aa).

The next 7 membrane-spanning stretches (helical) occupy residues 6–26, 38–58, 79–99, 105–125, 144–164, 171–191, and 231–251; these read YLVI…TPLV, VLAI…YLFP, IFLL…VFLK, GVLA…ELIF, NQIY…IILW, ISFF…ALMV, and LVFI…TLFA.

The protein localises to the cell membrane. This is an uncharacterized protein from Mycoplasma genitalium (strain ATCC 33530 / DSM 19775 / NCTC 10195 / G37) (Mycoplasmoides genitalium).